A 485-amino-acid chain; its full sequence is Signal recognition particle protein (485 aa).

GTP is bound by residues 107–114, 189–193, and 247–250; these read GLQGAGKT, DTAGR, and TKLD. The interval 452–485 is disordered; sequence GFGGGAPAPQPGFRGYGPPKKQKKGSKKKKGFGL. Residues 471-485 show a composition bias toward basic residues; the sequence is KKQKKGSKKKKGFGL.

Belongs to the GTP-binding SRP family. SRP54 subfamily. As to quaternary structure, part of the signal recognition particle protein translocation system, which is composed of SRP and FtsY.

Its subcellular location is the cytoplasm. The catalysed reaction is GTP + H2O = GDP + phosphate + H(+). In terms of biological role, involved in targeting and insertion of nascent membrane proteins into the cytoplasmic membrane. Binds to the hydrophobic signal sequence of the ribosome-nascent chain (RNC) as it emerges from the ribosomes. The SRP-RNC complex is then targeted to the cytoplasmic membrane where it interacts with the SRP receptor FtsY. This is Signal recognition particle protein from Synechococcus elongatus (strain ATCC 33912 / PCC 7942 / FACHB-805) (Anacystis nidulans R2).